We begin with the raw amino-acid sequence, 129 residues long: Ribosome-binding factor A (129 aa).

Belongs to the RbfA family. Monomer. Binds 30S ribosomal subunits, but not 50S ribosomal subunits or 70S ribosomes.

The protein localises to the cytoplasm. Functionally, one of several proteins that assist in the late maturation steps of the functional core of the 30S ribosomal subunit. Associates with free 30S ribosomal subunits (but not with 30S subunits that are part of 70S ribosomes or polysomes). Required for efficient processing of 16S rRNA. May interact with the 5'-terminal helix region of 16S rRNA. The chain is Ribosome-binding factor A from Actinobacillus succinogenes (strain ATCC 55618 / DSM 22257 / CCUG 43843 / 130Z).